The chain runs to 329 residues: MGATGDAEQPRGPSGAERGGLELGDAGAAGQLVLTNPWNIMIKHRQVQRRGRRSQMTTSFTDPAISMDLLRAVLQPSINEEIQTVFNKYMKFFQKAALNVRDNVGEEVDAEQLIQEACRSCLEQAKLLFSDGEKVIPRLTHELPGIKRGRQAEEECAHRGSPLPKKRKGRPPGHILSSDRAAAGMVWKPKSCEPIRREGPKWDPARLNESTTFVLGSRANKALGMGGTRGRIYIKHPHLFKYAADPQDKHWLAEQHHMRATGGKMAYLLIEEDIRDLAASDDYRGCLDLKLEELKSFVLPSWMVEKMRKYMETLRTENEHRAVEAPPQT.

Disordered stretches follow at residues 1-22 and 147-178; these read MGAT…GGLE and KRGR…ILSS. The segment at 56-147 is important for dimerization; that stretch reads MTTSFTDPAI…RLTHELPGIK (92 aa). Over residues 147 to 158 the composition is skewed to basic and acidic residues; it reads KRGRQAEEECAH. Residues 159 to 173 constitute a DNA-binding region (a.T hook); it reads RGSPLPKKRKGRPPG. Serine 161 carries the phosphoserine modification. Residues 164-170 carry the Nuclear localization signal motif; that stretch reads PKKRKGR. Residues 197-316 are important for DNA and nucleosome binding; the sequence is REGPKWDPAR…MRKYMETLRT (120 aa). A DNA-binding region (H-T-H motif) is located at residues 216–237; it reads GSRANKALGMGGTRGRIYIKHP.

As to quaternary structure, monomer and homodimer. A minor proportion may form homotrimers. Interacts with ZNF541. Interacts with the terminal deoxynucleotidyltransferase DNTT. Interacts with TRERF1. Identified in a histone deacetylase complex that contains DNTTIP1, HDAC1 and MIDEAS; this complex assembles into a tetramer that contains four copies of each protein chain. Component of a histone deacetylase complex containing DNTTIP1, ZNF541, HDAC1 and HDAC2. Identified in a complex with KCTD19, HDAC1, HDAC2 and ZNF541.

It localises to the nucleus. Its function is as follows. Increases DNTT terminal deoxynucleotidyltransferase activity (in vitro). Also acts as a transcriptional regulator, binding to the consensus sequence 5'-GNTGCATG-3' following an AT-tract. Associates with RAB20 promoter and positively regulates its transcription. Binds DNA and nucleosomes; may recruit HDAC1 complexes to nucleosomes or naked DNA. This Homo sapiens (Human) protein is Deoxynucleotidyltransferase terminal-interacting protein 1 (DNTTIP1).